We begin with the raw amino-acid sequence, 229 residues long: Aquaporin Z (229 aa).

The next 2 membrane-spanning stretches (helical) occupy residues 8-28 and 33-53; these read FLGT…AAGF and IGFA…AYAI. An NPA 1 motif is present at residues 62-64; that stretch reads NPA. The next 3 helical transmembrane spans lie at 88–108, 129–149, and 158–178; these read VLGA…GAGF, LLAA…VIMG, and GFAP…SIPV. The NPA 2 signature appears at 184–186; the sequence is NPA. A helical membrane pass occupies residues 192–212; sequence ALFVGGWAVQQLWLFWLAPII.

This sequence belongs to the MIP/aquaporin (TC 1.A.8) family. Homotetramer.

It is found in the cell inner membrane. The enzyme catalyses H2O(in) = H2O(out). Functionally, channel that permits osmotically driven movement of water in both directions. It is involved in the osmoregulation and in the maintenance of cell turgor during volume expansion in rapidly growing cells. It mediates rapid entry or exit of water in response to abrupt changes in osmolarity. In Chromobacterium violaceum (strain ATCC 12472 / DSM 30191 / JCM 1249 / CCUG 213 / NBRC 12614 / NCIMB 9131 / NCTC 9757 / MK), this protein is Aquaporin Z.